The sequence spans 601 residues: Ribosomal oxygenase 1 (601 aa).

The span at 1-11 shows a compositional bias: basic and acidic residues; that stretch reads MAACGAEERQR. Positions 1 to 149 are disordered; sequence MAACGAEERQ…PGGGGVPGLL (149 aa). Low complexity predominate over residues 61–70; sequence ERAAPPQGAA. Residues 73 to 87 show a composition bias toward basic and acidic residues; sequence DRVERAGSSEAKQGD. In terms of domain architecture, JmjC spans 254 to 399; it reads CSLRLLSPQA…DFLEKLLPAA (146 aa). 3 residues coordinate Fe cation: histidine 300, aspartate 302, and histidine 365.

This sequence belongs to the ROX family. NO66 subfamily. Fe(2+) is required as a cofactor.

It localises to the nucleus. It is found in the nucleolus. Its subcellular location is the nucleoplasm. It carries out the reaction N(6),N(6)-dimethyl-L-lysyl(36)-[histone H3] + 2 2-oxoglutarate + 2 O2 = L-lysyl(36)-[histone H3] + 2 formaldehyde + 2 succinate + 2 CO2. It catalyses the reaction N(6)-methyl-L-lysyl-[protein] + 2-oxoglutarate + O2 = L-lysyl-[protein] + formaldehyde + succinate + CO2. The enzyme catalyses L-histidyl-[protein] + 2-oxoglutarate + O2 = (3S)-3-hydroxy-L-histidyl-[protein] + succinate + CO2. Its function is as follows. Oxygenase that can act as both a histone lysine demethylase and a ribosomal histidine hydroxylase. Specifically demethylates 'Lys-4' (H3K4me) and 'Lys-36' (H3K36me) of histone H3, thereby playing a central role in histone code. Preferentially demethylates trimethylated H3 'Lys-4' (H3K4me3) and monomethylated H3 'Lys-4' (H3K4me1) residues, while it has weaker activity for dimethylated H3 'Lys-36' (H3K36me2). Also catalyzes demethylation of non-histone proteins. Also catalyzes the hydroxylation of 60S ribosomal protein L8 on 'His-216', thereby playing a role in ribosome biogenesis. This is Ribosomal oxygenase 1 (RIOX1) from Gallus gallus (Chicken).